The chain runs to 565 residues: Formate--tetrahydrofolate ligase (565 aa).

73–80 is a binding site for ATP; it reads TPAGEGKS.

This sequence belongs to the formate--tetrahydrofolate ligase family.

It catalyses the reaction (6S)-5,6,7,8-tetrahydrofolate + formate + ATP = (6R)-10-formyltetrahydrofolate + ADP + phosphate. It participates in one-carbon metabolism; tetrahydrofolate interconversion. This is Formate--tetrahydrofolate ligase from Arthrobacter sp. (strain FB24).